A 502-amino-acid chain; its full sequence is mRNA cap guanine-N(7) methyltransferase (502 aa).

The disordered stretch occupies residues 1 to 118; it reads MADENPQAQG…SQQEEAMRFS (118 aa). Residues 93 to 115 are compositionally biased toward basic and acidic residues; that stretch reads LVDRETLRRRQEERERSQQEEAM. Positions 146–502 constitute an mRNA cap 0 methyltransferase domain; sequence SKIKGLRSFN…FYHAFCFYKV (357 aa). An mRNA-binding site is contributed by 155–156; it reads NN. S-adenosyl-L-methionine-binding positions include Lys-159, Gly-202, Asp-226, Asp-264, 307 to 309, and Tyr-312; that span reads MFT. Positions 360 to 369 are enriched in basic and acidic residues; the sequence is ERETAAKKEE. Positions 360–381 are disordered; that stretch reads ERETAAKKEEAEPEDGEVEEDD. Acidic residues predominate over residues 370 to 381; it reads AEPEDGEVEEDD.

This sequence belongs to the class I-like SAM-binding methyltransferase superfamily. mRNA cap 0 methyltransferase family.

The protein resides in the nucleus. The enzyme catalyses a 5'-end (5'-triphosphoguanosine)-ribonucleoside in mRNA + S-adenosyl-L-methionine = a 5'-end (N(7)-methyl 5'-triphosphoguanosine)-ribonucleoside in mRNA + S-adenosyl-L-homocysteine. Functionally, responsible for methylating the 5'-cap structure of mRNAs. This Aspergillus oryzae (strain ATCC 42149 / RIB 40) (Yellow koji mold) protein is mRNA cap guanine-N(7) methyltransferase (abd1).